Reading from the N-terminus, the 356-residue chain is UDP-N-acetylglucosamine--N-acetylmuramyl-(pentapeptide) pyrophosphoryl-undecaprenol N-acetylglucosamine transferase (356 aa).

UDP-N-acetyl-alpha-D-glucosamine-binding positions include 12–14, asparagine 124, arginine 163, serine 188, isoleucine 242, and glutamine 287; that span reads TGG.

The protein belongs to the glycosyltransferase 28 family. MurG subfamily.

The protein localises to the cell inner membrane. It catalyses the reaction di-trans,octa-cis-undecaprenyl diphospho-N-acetyl-alpha-D-muramoyl-L-alanyl-D-glutamyl-meso-2,6-diaminopimeloyl-D-alanyl-D-alanine + UDP-N-acetyl-alpha-D-glucosamine = di-trans,octa-cis-undecaprenyl diphospho-[N-acetyl-alpha-D-glucosaminyl-(1-&gt;4)]-N-acetyl-alpha-D-muramoyl-L-alanyl-D-glutamyl-meso-2,6-diaminopimeloyl-D-alanyl-D-alanine + UDP + H(+). It functions in the pathway cell wall biogenesis; peptidoglycan biosynthesis. Functionally, cell wall formation. Catalyzes the transfer of a GlcNAc subunit on undecaprenyl-pyrophosphoryl-MurNAc-pentapeptide (lipid intermediate I) to form undecaprenyl-pyrophosphoryl-MurNAc-(pentapeptide)GlcNAc (lipid intermediate II). The protein is UDP-N-acetylglucosamine--N-acetylmuramyl-(pentapeptide) pyrophosphoryl-undecaprenol N-acetylglucosamine transferase of Pseudomonas savastanoi pv. phaseolicola (strain 1448A / Race 6) (Pseudomonas syringae pv. phaseolicola (strain 1448A / Race 6)).